The sequence spans 418 residues: tRNA-2-methylthio-N(6)-dimethylallyladenosine synthase (418 aa).

Positions 2–118 (PGYYLWTIGC…WREIPEGFIL (117 aa)) constitute an MTTase N-terminal domain. Residues Cys-11, Cys-47, Cys-81, Cys-134, Cys-138, and Cys-141 each coordinate [4Fe-4S] cluster. A Radical SAM core domain is found at 120 to 351 (LRPPVSANVT…EDLQKETVGK (232 aa)). The TRAM domain occupies 346–414 (KETVGKANAA…PWSLQAKLVN (69 aa)).

This sequence belongs to the methylthiotransferase family. MiaB subfamily. Monomer. [4Fe-4S] cluster serves as cofactor.

The protein resides in the cytoplasm. It catalyses the reaction N(6)-dimethylallyladenosine(37) in tRNA + (sulfur carrier)-SH + AH2 + 2 S-adenosyl-L-methionine = 2-methylsulfanyl-N(6)-dimethylallyladenosine(37) in tRNA + (sulfur carrier)-H + 5'-deoxyadenosine + L-methionine + A + S-adenosyl-L-homocysteine + 2 H(+). Catalyzes the methylthiolation of N6-(dimethylallyl)adenosine (i(6)A), leading to the formation of 2-methylthio-N6-(dimethylallyl)adenosine (ms(2)i(6)A) at position 37 in tRNAs that read codons beginning with uridine. In Dehalococcoides mccartyi (strain ATCC BAA-2100 / JCM 16839 / KCTC 5957 / BAV1), this protein is tRNA-2-methylthio-N(6)-dimethylallyladenosine synthase.